Reading from the N-terminus, the 682-residue chain is Potassium-transporting ATPase ATP-binding subunit (682 aa).

4 helical membrane passes run 34–54 (PVMF…IAMA), 62–82 (ALFS…ANFA), 219–239 (IALT…TATL), and 254–274 (VLVA…LSAI). Asp-307 (4-aspartylphosphate intermediate) is an active-site residue. ATP-binding positions include Asp-344, Glu-348, 377–384 (FTAQSRMS), and Lys-395. Asp-518 and Asp-522 together coordinate Mg(2+). 3 helical membrane-spanning segments follow: residues 588–608 (FAII…LNIM), 616–636 (AILS…PLAL), and 656–676 (IYGL…DLLL).

Belongs to the cation transport ATPase (P-type) (TC 3.A.3) family. Type IA subfamily. As to quaternary structure, the system is composed of three essential subunits: KdpA, KdpB and KdpC.

Its subcellular location is the cell inner membrane. It carries out the reaction K(+)(out) + ATP + H2O = K(+)(in) + ADP + phosphate + H(+). Its function is as follows. Part of the high-affinity ATP-driven potassium transport (or Kdp) system, which catalyzes the hydrolysis of ATP coupled with the electrogenic transport of potassium into the cytoplasm. This subunit is responsible for energy coupling to the transport system and for the release of the potassium ions to the cytoplasm. This is Potassium-transporting ATPase ATP-binding subunit from Escherichia coli (strain ATCC 8739 / DSM 1576 / NBRC 3972 / NCIMB 8545 / WDCM 00012 / Crooks).